The sequence spans 188 residues: MATYSTNEFRSGLKIMLDGEPCAILESEFVKPGKGQAFARVRIRKLISGKLLEKTFKSTDSVESADVMDMNLTYLYNDGEFWHFMNNETFEQLAADEKAVGDNAKWLVEQAECILTLWNGQPISVTPPNFVELEITDTDPGLKGDTAGTGGKPATLNTGAVVKVPLFVQIGEVIKVDTRSGEYVSRVK.

Lys34 is subject to N6-(3,6-diaminohexanoyl)-5-hydroxylysine.

The protein belongs to the elongation factor P family. Post-translationally, may be beta-lysylated on the epsilon-amino group of Lys-34 by the combined action of EpmA and EpmB, and then hydroxylated on the C5 position of the same residue by EpmC (if this protein is present). Lysylation is critical for the stimulatory effect of EF-P on peptide-bond formation. The lysylation moiety may extend toward the peptidyltransferase center and stabilize the terminal 3-CCA end of the tRNA. Hydroxylation of the C5 position on Lys-34 may allow additional potential stabilizing hydrogen-bond interactions with the P-tRNA.

The protein resides in the cytoplasm. It participates in protein biosynthesis; polypeptide chain elongation. In terms of biological role, involved in peptide bond synthesis. Alleviates ribosome stalling that occurs when 3 or more consecutive Pro residues or the sequence PPG is present in a protein, possibly by augmenting the peptidyl transferase activity of the ribosome. Modification of Lys-34 is required for alleviation. The protein is Elongation factor P of Photorhabdus laumondii subsp. laumondii (strain DSM 15139 / CIP 105565 / TT01) (Photorhabdus luminescens subsp. laumondii).